The following is a 171-amino-acid chain: tRNA-splicing endonuclease subunit Sen15 (171 aa).

Residues 1–35 (MEERGDSEPTPGCSGLGPGGVRGFGDGGGAPSWAP) form a disordered region. Position 7 is a phosphoserine (Ser7). Positions 14–30 (SGLGPGGVRGFGDGGGA) are enriched in gly residues. A Phosphoserine modification is found at Ser168.

The protein belongs to the SEN15 family. In terms of assembly, homodimer. tRNA splicing endonuclease is a heterotetramer composed of TSEN2, TSEN15, TSEN34/LENG5 and TSEN54. tRNA splicing endonuclease complex also contains proteins of the Pre-mRNA 3' end processing machinery, such as CLP1, CPSF1, CPSF4 and CSTF2. In terms of tissue distribution, widely expressed. Highly expressed in testis and uterus.

It localises to the nucleus. The protein resides in the nucleolus. Non-catalytic subunit of the tRNA-splicing endonuclease complex, a complex responsible for identification and cleavage of the splice sites in pre-tRNA. It cleaves pre-tRNA at the 5' and 3' splice sites to release the intron. The products are an intron and two tRNA half-molecules bearing 2',3' cyclic phosphate and 5'-OH termini. There are no conserved sequences at the splice sites, but the intron is invariably located at the same site in the gene, placing the splice sites an invariant distance from the constant structural features of the tRNA body. The tRNA splicing endonuclease is also involved in mRNA processing via its association with pre-mRNA 3'-end processing factors, establishing a link between pre-tRNA splicing and pre-mRNA 3'-end formation, suggesting that the endonuclease subunits function in multiple RNA-processing events. The protein is tRNA-splicing endonuclease subunit Sen15 (TSEN15) of Homo sapiens (Human).